Reading from the N-terminus, the 144-residue chain is Small ribosomal subunit protein eS19A (144 aa).

The tract at residues 83 to 102 (VNRGMRPSHHRDGSGSVQRK) is disordered.

It belongs to the eukaryotic ribosomal protein eS19 family. In terms of assembly, component of the small ribosomal subunit (SSU). Mature yeast ribosomes consist of a small (40S) and a large (60S) subunit. The 40S small subunit contains 1 molecule of ribosomal RNA (18S rRNA) and at least 33 different proteins. The large 60S subunit contains 3 rRNA molecules (25S, 5.8S and 5S rRNA) and at least 46 different proteins.

It localises to the cytoplasm. It is found in the nucleus. The protein resides in the nucleolus. In terms of biological role, component of the ribosome, a large ribonucleoprotein complex responsible for the synthesis of proteins in the cell. The small ribosomal subunit (SSU) binds messenger RNAs (mRNAs) and translates the encoded message by selecting cognate aminoacyl-transfer RNA (tRNA) molecules. The large subunit (LSU) contains the ribosomal catalytic site termed the peptidyl transferase center (PTC), which catalyzes the formation of peptide bonds, thereby polymerizing the amino acids delivered by tRNAs into a polypeptide chain. The nascent polypeptides leave the ribosome through a tunnel in the LSU and interact with protein factors that function in enzymatic processing, targeting, and the membrane insertion of nascent chains at the exit of the ribosomal tunnel. eS19 is required for proper maturation of the small (40S) ribosomal subunit. Binds to 40S pre-ribosomal particles, probably required after association of NOC4 but before association of ENP1, TSR1 and RIO2 with 20/21S pre-rRNA. This is Small ribosomal subunit protein eS19A (rps1901) from Schizosaccharomyces pombe (strain 972 / ATCC 24843) (Fission yeast).